A 931-amino-acid polypeptide reads, in one-letter code: Phosphoenolpyruvate carboxylase (931 aa).

Catalysis depends on residues His138 and Lys594.

Belongs to the PEPCase type 1 family. It depends on Mg(2+) as a cofactor.

The enzyme catalyses oxaloacetate + phosphate = phosphoenolpyruvate + hydrogencarbonate. In terms of biological role, forms oxaloacetate, a four-carbon dicarboxylic acid source for the tricarboxylic acid cycle. The sequence is that of Phosphoenolpyruvate carboxylase from Streptococcus agalactiae serotype Ia (strain ATCC 27591 / A909 / CDC SS700).